Consider the following 510-residue polypeptide: Proline--tRNA ligase (510 aa).

The protein belongs to the class-II aminoacyl-tRNA synthetase family. ProS type 3 subfamily. Homodimer.

It is found in the cytoplasm. The enzyme catalyses tRNA(Pro) + L-proline + ATP = L-prolyl-tRNA(Pro) + AMP + diphosphate. Catalyzes the attachment of proline to tRNA(Pro) in a two-step reaction: proline is first activated by ATP to form Pro-AMP and then transferred to the acceptor end of tRNA(Pro). The sequence is that of Proline--tRNA ligase from Sphingomonas elodea.